Reading from the N-terminus, the 136-residue chain is uncharacterized protein (136 aa).

Belongs to the mimivirus L163/R849 family.

This is an uncharacterized protein from Acanthamoeba polyphaga mimivirus (APMV).